We begin with the raw amino-acid sequence, 238 residues long: uncharacterized protein (238 aa).

3 helical membrane passes run isoleucine 19–isoleucine 39, isoleucine 79–isoleucine 99, and tyrosine 141–cysteine 161.

It is found in the cell membrane. This is an uncharacterized protein from Methanocaldococcus jannaschii (strain ATCC 43067 / DSM 2661 / JAL-1 / JCM 10045 / NBRC 100440) (Methanococcus jannaschii).